Here is a 591-residue protein sequence, read N- to C-terminus: 2-succinyl-5-enolpyruvyl-6-hydroxy-3-cyclohexene-1-carboxylate synthase (591 aa).

Belongs to the TPP enzyme family. MenD subfamily. Homodimer. It depends on Mg(2+) as a cofactor. Requires Mn(2+) as cofactor. The cofactor is thiamine diphosphate.

The enzyme catalyses isochorismate + 2-oxoglutarate + H(+) = 5-enolpyruvoyl-6-hydroxy-2-succinyl-cyclohex-3-ene-1-carboxylate + CO2. Its pathway is quinol/quinone metabolism; 1,4-dihydroxy-2-naphthoate biosynthesis; 1,4-dihydroxy-2-naphthoate from chorismate: step 2/7. The protein operates within cofactor biosynthesis; phylloquinone biosynthesis. In terms of biological role, catalyzes the thiamine diphosphate-dependent decarboxylation of 2-oxoglutarate and the subsequent addition of the resulting succinic semialdehyde-thiamine pyrophosphate anion to isochorismate to yield 2-succinyl-5-enolpyruvyl-6-hydroxy-3-cyclohexene-1-carboxylate (SEPHCHC). This is 2-succinyl-5-enolpyruvyl-6-hydroxy-3-cyclohexene-1-carboxylate synthase from Rippkaea orientalis (strain PCC 8801 / RF-1) (Cyanothece sp. (strain PCC 8801)).